Reading from the N-terminus, the 426-residue chain is Proline--tRNA ligase (426 aa).

This sequence belongs to the class-II aminoacyl-tRNA synthetase family. ProS type 2 subfamily. In terms of assembly, homodimer.

Its subcellular location is the cytoplasm. It carries out the reaction tRNA(Pro) + L-proline + ATP = L-prolyl-tRNA(Pro) + AMP + diphosphate. Functionally, catalyzes the attachment of proline to tRNA(Pro) in a two-step reaction: proline is first activated by ATP to form Pro-AMP and then transferred to the acceptor end of tRNA(Pro). The polypeptide is Proline--tRNA ligase (Rickettsia peacockii (strain Rustic)).